A 682-amino-acid chain; its full sequence is E3 ubiquitin ligase Rnf157 (682 aa).

A lipid anchor (N-myristoyl glycine) is attached at Gly2. The RING-type; degenerate zinc finger occupies 277–317; that stretch reads CVVCLSDVRDTLILPCRHCASCNVHCADTLRYQANNCPICR. Positions 330–333 match the D-box 1 motif; the sequence is RKKL. Disordered stretches follow at residues 440–604 and 655–682; these read QNSS…VQED and NTQR…PLAV. The span at 479-538 shows a compositional bias: polar residues; the sequence is ESENLTLSSSGAVDQSSCTGTPLSSTISSPEDPASSSLAQSVMSMASSQISTDTVSSMSG. A compositionally biased stretch (acidic residues) spans 585–597; the sequence is QDAEGNDIMEEED. The D-box 2 signature appears at 658-661; it reads RRRL. 3 positions are modified to phosphoserine: Ser662, Ser664, and Ser665.

Interacts with APBB1. Interacts with CHD1; CHD1-binding controls RNF157 stability. Also interacts with ATRN, MEGF8, TECR, MSI2, PLRG1, BYSL, MTERF3, PSMA1, MRPS18B, PRPF4, FASTKD2, SLC25A1, SMU1, CNOT9, MRPS2, MAGT1, FXR2, EMD, PSMD8, HDAC1, RAN, HSD17B12, TXNDC5 and MRPL19. As to expression, predominantly expressed in the brain.

The protein localises to the cytoplasm. The catalysed reaction is S-ubiquitinyl-[E2 ubiquitin-conjugating enzyme]-L-cysteine + [acceptor protein]-L-lysine = [E2 ubiquitin-conjugating enzyme]-L-cysteine + N(6)-ubiquitinyl-[acceptor protein]-L-lysine.. Its function is as follows. E3 ubiquitin ligase that ubiquitinates APBB1 for its degradation by the proteasome and thus prevents apoptosis and promotes survival of neurons. Has a dual role in neurons as it is also required for dendrite growth and maintenance for which its ligase activity is not critical. May act as a scaffold molecule to regulate this process. Acts as a downstream effector of the interconnected PI3K and MAPK signaling pathways and thus participates in the regulation of the cell cycle. In Rattus norvegicus (Rat), this protein is E3 ubiquitin ligase Rnf157 (Rnf157).